A 267-amino-acid polypeptide reads, in one-letter code: 4-hydroxy-tetrahydrodipicolinate reductase (267 aa).

NAD(+) is bound by residues 8-13 (GAAGRM) and D34. R35 contacts NADP(+). Residues 98-100 (GTT) and 122-125 (AANF) each bind NAD(+). The Proton donor/acceptor role is filled by H155. H156 lines the (S)-2,3,4,5-tetrahydrodipicolinate pocket. The Proton donor role is filled by K159. A (S)-2,3,4,5-tetrahydrodipicolinate-binding site is contributed by 165-166 (GT).

Belongs to the DapB family.

The protein localises to the cytoplasm. It catalyses the reaction (S)-2,3,4,5-tetrahydrodipicolinate + NAD(+) + H2O = (2S,4S)-4-hydroxy-2,3,4,5-tetrahydrodipicolinate + NADH + H(+). The catalysed reaction is (S)-2,3,4,5-tetrahydrodipicolinate + NADP(+) + H2O = (2S,4S)-4-hydroxy-2,3,4,5-tetrahydrodipicolinate + NADPH + H(+). Its pathway is amino-acid biosynthesis; L-lysine biosynthesis via DAP pathway; (S)-tetrahydrodipicolinate from L-aspartate: step 4/4. In terms of biological role, catalyzes the conversion of 4-hydroxy-tetrahydrodipicolinate (HTPA) to tetrahydrodipicolinate. The protein is 4-hydroxy-tetrahydrodipicolinate reductase of Pseudomonas putida (strain ATCC 47054 / DSM 6125 / CFBP 8728 / NCIMB 11950 / KT2440).